The chain runs to 290 residues: Arylamine N-acetyltransferase, pineal gland isozyme NAT-3 (290 aa).

The active-site Acyl-thioester intermediate is the cysteine 68. Catalysis depends on residues histidine 107 and aspartate 122.

The protein belongs to the arylamine N-acetyltransferase family.

It catalyses the reaction an arylamine + acetyl-CoA = an N-acetylarylamine + CoA. The catalysed reaction is an N-hydroxyarylamine + acetyl-CoA = an N-acetoxyarylamine + CoA. In terms of biological role, catalyzes the N- or O-acetylation of various arylamine and heterocyclic amine substrates, and participates in the detoxification of a plethora of hydrazine and arylamine drugs. This chain is Arylamine N-acetyltransferase, pineal gland isozyme NAT-3, found in Gallus gallus (Chicken).